The chain runs to 100 residues: Urease subunit gamma (100 aa).

It belongs to the urease gamma subunit family. As to quaternary structure, heterotrimer of UreA (gamma), UreB (beta) and UreC (alpha) subunits. Three heterotrimers associate to form the active enzyme.

Its subcellular location is the cytoplasm. The enzyme catalyses urea + 2 H2O + H(+) = hydrogencarbonate + 2 NH4(+). The protein operates within nitrogen metabolism; urea degradation; CO(2) and NH(3) from urea (urease route): step 1/1. This is Urease subunit gamma from Delftia acidovorans (strain DSM 14801 / SPH-1).